The primary structure comprises 306 residues: UDP-3-O-acyl-N-acetylglucosamine deacetylase (306 aa).

Zn(2+) is bound by residues H79, H238, and D242. Residue H265 is the Proton donor of the active site.

Belongs to the LpxC family. Requires Zn(2+) as cofactor.

It catalyses the reaction a UDP-3-O-[(3R)-3-hydroxyacyl]-N-acetyl-alpha-D-glucosamine + H2O = a UDP-3-O-[(3R)-3-hydroxyacyl]-alpha-D-glucosamine + acetate. The protein operates within glycolipid biosynthesis; lipid IV(A) biosynthesis; lipid IV(A) from (3R)-3-hydroxytetradecanoyl-[acyl-carrier-protein] and UDP-N-acetyl-alpha-D-glucosamine: step 2/6. Its function is as follows. Catalyzes the hydrolysis of UDP-3-O-myristoyl-N-acetylglucosamine to form UDP-3-O-myristoylglucosamine and acetate, the committed step in lipid A biosynthesis. This chain is UDP-3-O-acyl-N-acetylglucosamine deacetylase, found in Shewanella sp. (strain W3-18-1).